The following is a 163-amino-acid chain: Nucleotide-binding protein PMI0103 (163 aa).

The protein belongs to the YajQ family.

Its function is as follows. Nucleotide-binding protein. This chain is Nucleotide-binding protein PMI0103, found in Proteus mirabilis (strain HI4320).